Reading from the N-terminus, the 428-residue chain is Cyclin-B1-1 (428 aa).

This sequence belongs to the cyclin family. Cyclin AB subfamily. As to quaternary structure, interacts with FZR2/CCS52A1, FZR1/CCS52A2 and FZR3/CCS52B. Expressed in root tip, lateral root apex, shoot apex, leaf primordia, axillary buds, stamen and petal primordia, ovules and developing embryo.

The protein resides in the nucleus. This is Cyclin-B1-1 (CYCB1-1) from Arabidopsis thaliana (Mouse-ear cress).